A 177-amino-acid chain; its full sequence is Large ribosomal subunit protein uL6 (177 aa).

Belongs to the universal ribosomal protein uL6 family. Part of the 50S ribosomal subunit.

In terms of biological role, this protein binds to the 23S rRNA, and is important in its secondary structure. It is located near the subunit interface in the base of the L7/L12 stalk, and near the tRNA binding site of the peptidyltransferase center. This Salmonella arizonae (strain ATCC BAA-731 / CDC346-86 / RSK2980) protein is Large ribosomal subunit protein uL6.